The sequence spans 291 residues: MEGMDVDLDAELMQKFSCLGTTDKDVLIGEFQRLLGFQLSPAGCAFFLDMTNWNLQAAIGAYYDFESPNINVPSMSFVEDVTIGEGESIPPDTQFTKTWRIQNTGTEVWPPGVCLKYVGGDQFGHVNMVMVRSLEPQEIADVSVQMCSPSTAGMYQGQWRMCTATGLYYGDVIWVILSVEVGGLLGVTQQLSSFETEFNTQPHRKVEGNFNPFASPQKNRQPDENNLKDPGGSELGTISKNTWGPAPDQIEQDQNGLSQNSVNLSPSSHSNNLSVVTYSKGFHGPYPFGQS.

Positions Asn199 to Val275 are disordered. The span at Leu257 to Val275 shows a compositional bias: low complexity.

Its subcellular location is the cytoplasm. The protein localises to the nucleus. In terms of biological role, may have a roles as negative regulator of innate antiviral response. In Gallus gallus (Chicken), this protein is Protein ILRUN (ILRUN).